Here is a 229-residue protein sequence, read N- to C-terminus: 2,3-bisphosphoglycerate-dependent phosphoglycerate mutase 2 (229 aa).

Substrate-binding positions include 12–19 (RHGESVAN), 25–26 (TG), Arg65, 92–95 (ERHY), Lys103, and 119–120 (RR). The active-site Tele-phosphohistidine intermediate is the His13. Glu92 serves as the catalytic Proton donor/acceptor.

The protein belongs to the phosphoglycerate mutase family. BPG-dependent PGAM subfamily.

The catalysed reaction is (2R)-2-phosphoglycerate = (2R)-3-phosphoglycerate. It participates in carbohydrate degradation; glycolysis; pyruvate from D-glyceraldehyde 3-phosphate: step 3/5. Functionally, catalyzes the interconversion of 2-phosphoglycerate and 3-phosphoglycerate. The chain is 2,3-bisphosphoglycerate-dependent phosphoglycerate mutase 2 from Lactobacillus johnsonii (strain CNCM I-12250 / La1 / NCC 533).